Reading from the N-terminus, the 410-residue chain is MILFAIDYLERVWTLKVPSVFSYYSTRMILAAITSLLLSIFLGPYFIRKLYELKIGQSIRKEDCPLLGQLHEKKQNTPTMGGILILSSMLVSLVLWMDLTHIFTLILFVTTVFLGLIGGRDDYLKLKYKNTKGMSARGKLFFQFVLSAAIASYFLLSSVNEMFEKWTWFQPPVIKEQIVVKNSETLQEMPSQTKSISLKEYASRLYIPFFKEPVVTFGGISLILMAFFIFFVITGSSNAANLTDGLDGLLAGCLVTAAGSLCLIAFVSNHVDIARYLNILYIEGSGEIAIYLCALIGASLGFLWYNGYPAQVFMGDTGSLTLGGILGVSAVLLRREFLLGIVGGIFVAEALSVILQVASYRLRNKKRIFLCAPLHHHFEYKGWPETKVVIRFWIMSLLFAIIGIASLKFQ.

A run of 10 helical transmembrane segments spans residues 27-47 (RMIL…PYFI), 77-97 (TPTM…VLWM), 99-119 (LTHI…LIGG), 140-160 (LFFQ…SSVN), 213-233 (PVVT…FFVI), 248-268 (GLLA…AFVS), 288-308 (IAIY…YNGY), 312-332 (VFMG…SAVL), 337-357 (FLLG…ILQV), and 389-409 (VIRF…SLKF).

The protein belongs to the glycosyltransferase 4 family. MraY subfamily. Mg(2+) serves as cofactor.

It localises to the cell inner membrane. The catalysed reaction is UDP-N-acetyl-alpha-D-muramoyl-L-alanyl-gamma-D-glutamyl-meso-2,6-diaminopimeloyl-D-alanyl-D-alanine + di-trans,octa-cis-undecaprenyl phosphate = di-trans,octa-cis-undecaprenyl diphospho-N-acetyl-alpha-D-muramoyl-L-alanyl-D-glutamyl-meso-2,6-diaminopimeloyl-D-alanyl-D-alanine + UMP. The protein operates within cell wall biogenesis; peptidoglycan biosynthesis. In terms of biological role, catalyzes the initial step of the lipid cycle reactions in the biosynthesis of the cell wall peptidoglycan: transfers peptidoglycan precursor phospho-MurNAc-pentapeptide from UDP-MurNAc-pentapeptide onto the lipid carrier undecaprenyl phosphate, yielding undecaprenyl-pyrophosphoryl-MurNAc-pentapeptide, known as lipid I. The chain is Phospho-N-acetylmuramoyl-pentapeptide-transferase from Protochlamydia amoebophila (strain UWE25).